The following is a 249-amino-acid chain: Carbohydrate deacetylase (249 aa).

Mg(2+) contacts are provided by His60 and His125.

Belongs to the YdjC deacetylase family. Homodimer. Mg(2+) serves as cofactor.

In terms of biological role, probably catalyzes the deacetylation of acetylated carbohydrates an important step in the degradation of oligosaccharides. In Thermoanaerobacter pseudethanolicus (strain ATCC 33223 / 39E) (Clostridium thermohydrosulfuricum), this protein is Carbohydrate deacetylase.